A 572-amino-acid chain; its full sequence is MKTSLQIAAEARLEPIAAIAERLGLPVRYLEPYGRYRGKIDLTFLDDYHDRPLGRYVLVSAITPTPLGEGKTTTAIGLAMALNRIGKRAAVTLRQSSLGPVFGIKGGGAGGGYSQIVPLVESILHLNGDIHAVSQAHNQLAALTDNSWYHGNPLDIDPDRIEIRRVVDVNDRFLRQVMIGLGGKQNGFPRQTGFDISVASELMAILAMVNGVGARAALRDLRSRIGRMVVAFRRDGTPITAEDVRGAGAATVLMREALKPNLMQTIENTPALIHAGPFANIAQGNSSILADLIALRCADYVVTEAGFGVDIGAEKFFNLKCRASGLWPDVAVIVATIRALKAHSGKYDIVAGKPLPPALLHENPDDVISGGANLRRQIENLHQFKVPVIVALNAYPEDTPAEIDAVAHIATTAGAAGMAVSNVYAAGSAGGVDLARLVIEIAERPGPRPVQFLYPLEWSLADKITTIAHRIYGAAAVTFSPTAAAQLAALEDAGFGNLPICMAKTHLSLSHDPALRGAPEGFTFPIREVRLSAGAGFILPIAGTTVTMPGLGAHPAAHQIDIDDEGNIVGLF.

Residue 65–72 (TPLGEGKT) coordinates ATP.

It belongs to the formate--tetrahydrofolate ligase family.

It catalyses the reaction (6S)-5,6,7,8-tetrahydrofolate + formate + ATP = (6R)-10-formyltetrahydrofolate + ADP + phosphate. It participates in one-carbon metabolism; tetrahydrofolate interconversion. The polypeptide is Formate--tetrahydrofolate ligase (Chloroflexus aurantiacus (strain ATCC 29366 / DSM 635 / J-10-fl)).